The chain runs to 107 residues: uncharacterized protein (107 aa).

3 helical membrane passes run 16–36 (VIPC…SESL), 47–67 (IISL…HSLV), and 85–105 (LIVL…TSLI).

The protein resides in the membrane. This is an uncharacterized protein from Saccharomyces cerevisiae (strain ATCC 204508 / S288c) (Baker's yeast).